Consider the following 320-residue polypeptide: Cytochrome f (320 aa).

An N-terminal signal peptide occupies residues 1–35; sequence MQTRKTFSWIKEQIARSISVSLLIYIITRTSISSA. The heme site is built by Y36, C56, C59, and H60. Residues 286 to 306 traverse the membrane as a helical segment; that stretch reads VQGLLFFLASVILAQIFLVLK.

Belongs to the cytochrome f family. The 4 large subunits of the cytochrome b6-f complex are cytochrome b6, subunit IV (17 kDa polypeptide, petD), cytochrome f and the Rieske protein, while the 4 small subunits are PetG, PetL, PetM and PetN. The complex functions as a dimer. Heme serves as cofactor.

It localises to the plastid. Its subcellular location is the chloroplast thylakoid membrane. Component of the cytochrome b6-f complex, which mediates electron transfer between photosystem II (PSII) and photosystem I (PSI), cyclic electron flow around PSI, and state transitions. This is Cytochrome f from Jasminum nudiflorum (Winter jasmine).